A 22-amino-acid polypeptide reads, in one-letter code: AAKPLDKSSSSLHHGYSKVHVP.

Residues Ala1–Pro22 are disordered.

It localises to the cell membrane. Binds various plasma and ECM-proteins. The sequence is that of 65 kDa membrane protein from Staphylococcus aureus.